We begin with the raw amino-acid sequence, 927 residues long: MSENEIVPDEFRCNRSDGKQWRCKRRALEGKKMCESHHSQQSLKRSKQKVAESSKLVRSRRGGGDEVASSEIEPNESRIRSKRLGKSKRKRVMGEAEAMDEAVKKMKLKRGDLQLDLIRMVLKREVEKRKRLPNSNNKKKSNGGFSEFVGEELTRVLPNGIMAISPPSPTTSNVSSPCDVKVGEEPISMIKRRFRSKNIEPLPIGKMQVVPFKGDLVNGRKEKKMRCHWCGTRGFGDLISCLSCEREFFCIDCIEKRNKGSKEEVEKKCPVCRGSCRCKVCSVTNSGVTECKDSQSVRSDIDRVLHLHYAVCMLLPVLKEINAEHKVEVENDAEKKEGNPAEPQIHSSELTSDDRQPCSNGRDFAVVDLQRMCTRSSSVLRLNSDQDQSQESLSRKVGSVKCSNGIKSPKVCKRKEVKGCSNNLFLSLFPLELTSKLEISAEEVVSCYELPEILDKYSGCPFCIGMETQSSSSDSHLKEASKTREDGTGNFLYYPTVLDFHQNNLEHFQTHWSKGHPVIVRSVIKSGSSLNWDPVALFCHYLMNRNNKTGNTTDCMDWFEVEIGVKQFFLGSLRGKAETNTCQERLKLEGWLSSSLFKEQFPNHYAEILNILPISHYMDPKRGLLNIAANLPDTVQPPDFGPCLNISYRSGEEYAQPDSVKKLGFETCDMVDILLYVTETPVSTNQICRIRKLMKNIGRVRSKNPAKGRESRFDKGKKRDRLDDYSSSDSESSQHCLGAKCRGSEFEGEERESCNYSCEEESLSNTYGAQWDVFQKQDVSKLLEYIKNHSLELESMDSSKKKVSHPLLEQSYYLDEYHKARLKEEFDVEPWSFDQCVGEAVILPAGCPYQIRKNKSCVNAVLKFLSPEHVSESIKRVKELNQLPQSVKSKANKIEVKKMAIHKISEAVKEIRELTSSDSTGALRLYN.

The WRC domain maps to 7 to 52 (VPDEFRCNRSDGKQWRCKRRALEGKKMCESHHSQQSLKRSKQKVAE). The short motif at 30–37 (GKKMCESH) is the Nuclear localization signal 1 element. The tract at residues 30–92 (GKKMCESHHS…RLGKSKRKRV (63 aa)) is disordered. Positions 80–91 (RSKRLGKSKRKR) are enriched in basic residues. Positions 127–134 (EKRKRLPN) match the Nuclear localization signal 2 motif. 8 residues coordinate Zn(2+): Cys227, Cys230, Cys241, Cys244, Cys250, Cys253, Cys269, and Cys272. The RING-type; degenerate zinc finger occupies 227-273 (CHWCGTRGFGDLISCLSCEREFFCIDCIEKRNKGSKEEVEKKCPVCR). The span at 330 to 339 (ENDAEKKEGN) shows a compositional bias: basic and acidic residues. Disordered stretches follow at residues 330 to 359 (ENDA…QPCS) and 701 to 736 (RSKN…SQHC). The JmjC domain maps to 601–881 (FPNHYAEILN…ESIKRVKELN (281 aa)).

This sequence belongs to the JARID1 histone demethylase family. Interacts with the FBH transcription factors FBH1, FBH2, FBH3 and FBH4. Fe(2+) is required as a cofactor. As to expression, expressed in inflorescences, flowers, roots, siliques, leaves and stems, especially in the vasculature (mainly phloem), with highest levels in floral organs. Present at high levels in flowers, shoot apex and young seeds, but observed at low levels in dry seeds, root apex and anthers.

It is found in the nucleus. May function as histone H3 lysine demethylase and be involved in regulation of gene expression. Regulates flowering time by promoting CONSTANS (CO) and CONSTANS-LIKE genes (e.g. COL2 and COL5) expression via interaction with FBH transcription factors (FBH1, FBH2, FBH3 and FBH4) at their loci to remove H3K9me2 repressive histone marks. Also modulates the expression of several developmental genes such as MYB30, TFS1, AGL6 and RVE2. In Arabidopsis thaliana (Mouse-ear cress), this protein is Lysine-specific demethylase JMJ28.